Reading from the N-terminus, the 322-residue chain is Probable 2-oxoglutarate-dependent dioxygenase AOP1 (322 aa).

The region spanning 165-271 (TYYLTRLMKY…RYSTGLFSIP (107 aa)) is the Fe2OG dioxygenase domain. Positions 195, 197, and 252 each coordinate Fe cation. Arg-262 provides a ligand contact to 2-oxoglutarate.

This sequence belongs to the iron/ascorbate-dependent oxidoreductase family. It depends on Fe(2+) as a cofactor.

In terms of biological role, probable 2-oxoglutarate-dependent dioxygenase that may be involved in glucosinolates biosynthesis. May play a role in the production of aliphatic glucosinolates. The chain is Probable 2-oxoglutarate-dependent dioxygenase AOP1 (AOP1) from Arabidopsis thaliana (Mouse-ear cress).